The sequence spans 503 residues: Cytosol aminopeptidase (503 aa).

Positions 269 and 274 each coordinate Mn(2+). Residue Lys281 is part of the active site. Mn(2+) contacts are provided by Asp292, Asp351, and Glu353. Residue Arg355 is part of the active site.

This sequence belongs to the peptidase M17 family. Mn(2+) serves as cofactor.

The protein resides in the cytoplasm. It catalyses the reaction Release of an N-terminal amino acid, Xaa-|-Yaa-, in which Xaa is preferably Leu, but may be other amino acids including Pro although not Arg or Lys, and Yaa may be Pro. Amino acid amides and methyl esters are also readily hydrolyzed, but rates on arylamides are exceedingly low.. The enzyme catalyses Release of an N-terminal amino acid, preferentially leucine, but not glutamic or aspartic acids.. Presumably involved in the processing and regular turnover of intracellular proteins. Catalyzes the removal of unsubstituted N-terminal amino acids from various peptides. In Vibrio cholerae serotype O1 (strain ATCC 39541 / Classical Ogawa 395 / O395), this protein is Cytosol aminopeptidase.